The sequence spans 431 residues: Bone morphogenetic protein 7 (431 aa).

Residues methionine 1 to alanine 29 form the signal peptide. A propeptide spanning residues aspartate 30–arginine 292 is cleaved from the precursor. N-linked (GlcNAc...) asparagine glycosylation is found at asparagine 187, asparagine 302, asparagine 321, and asparagine 372. Residues isoleucine 291–glutamate 311 are disordered. 3 disulfides stabilise this stretch: cysteine 330–cysteine 396, cysteine 359–cysteine 428, and cysteine 363–cysteine 430.

This sequence belongs to the TGF-beta family. Homodimer; disulfide-linked. Interacts with SOSTDC1. Interacts with TWSG1. Interacts with FBN1 (via N-terminal domain) and FBN2. Interacts with type I receptor ACVR1. Interacts with type II receptor ACVR2A. Interacts with NOG; this interaction inhibits canonical BMP signaling. Interacts with SCUBE3. Interacts with ERFE; the interaction inhibits BMP-induced transcription of HAMP. Interacts with TGFBR3. Post-translationally, several N-termini starting at positions 293, 300, 315 and 316 have been identified by direct sequencing resulting in secretion of different mature forms. As to expression, expressed in the kidney and bladder. Lower levels seen in the brain.

The protein localises to the secreted. Functionally, growth factor of the TGF-beta superfamily that plays important role in various biological processes, including embryogenesis, hematopoiesis, neurogenesis and skeletal morphogenesis. Initiates the canonical BMP signaling cascade by associating with type I receptor ACVR1 and type II receptor ACVR2A. Once all three components are bound together in a complex at the cell surface, ACVR2A phosphorylates and activates ACVR1. In turn, ACVR1 propagates signal by phosphorylating SMAD1/5/8 that travel to the nucleus and act as activators and repressors of transcription of target genes. For specific functions such as growth cone collapse in developing spinal neurons and chemotaxis of monocytes, also uses BMPR2 as type II receptor. Can also signal through non-canonical pathways such as P38 MAP kinase signaling cascade that promotes brown adipocyte differentiation through activation of target genes, including members of the SOX family of transcription factors. Promotes the expression of HAMP, this is repressed by its interaction with ERFE. This Homo sapiens (Human) protein is Bone morphogenetic protein 7 (BMP7).